We begin with the raw amino-acid sequence, 521 residues long: GMP synthase [glutamine-hydrolyzing] (521 aa).

One can recognise a Glutamine amidotransferase type-1 domain in the interval 5-203; sequence KILILDFGSQ…VHEICGCGND (199 aa). The active-site Nucleophile is Cys-82. Active-site residues include His-177 and Glu-179. Residues 204–396 form the GMPS ATP-PPase domain; that stretch reads WNMPDYISEA…LGLPHDMVYR (193 aa). 231 to 237 provides a ligand contact to ATP; that stretch reads SGGVDSS.

As to quaternary structure, homodimer.

It catalyses the reaction XMP + L-glutamine + ATP + H2O = GMP + L-glutamate + AMP + diphosphate + 2 H(+). It participates in purine metabolism; GMP biosynthesis; GMP from XMP (L-Gln route): step 1/1. Its function is as follows. Catalyzes the synthesis of GMP from XMP. This Azoarcus sp. (strain BH72) protein is GMP synthase [glutamine-hydrolyzing].